Reading from the N-terminus, the 190-residue chain is Holliday junction branch migration complex subunit RuvA (190 aa).

The segment at methionine 1–glycine 64 is domain I. The domain II stretch occupies residues serine 65 to glycine 137. The tract at residues glycine 137–serine 141 is flexible linker. The interval valine 142–lysine 190 is domain III.

Belongs to the RuvA family. As to quaternary structure, homotetramer. Forms an RuvA(8)-RuvB(12)-Holliday junction (HJ) complex. HJ DNA is sandwiched between 2 RuvA tetramers; dsDNA enters through RuvA and exits via RuvB. An RuvB hexamer assembles on each DNA strand where it exits the tetramer. Each RuvB hexamer is contacted by two RuvA subunits (via domain III) on 2 adjacent RuvB subunits; this complex drives branch migration. In the full resolvosome a probable DNA-RuvA(4)-RuvB(12)-RuvC(2) complex forms which resolves the HJ.

It localises to the cytoplasm. Its function is as follows. The RuvA-RuvB-RuvC complex processes Holliday junction (HJ) DNA during genetic recombination and DNA repair, while the RuvA-RuvB complex plays an important role in the rescue of blocked DNA replication forks via replication fork reversal (RFR). RuvA specifically binds to HJ cruciform DNA, conferring on it an open structure. The RuvB hexamer acts as an ATP-dependent pump, pulling dsDNA into and through the RuvAB complex. HJ branch migration allows RuvC to scan DNA until it finds its consensus sequence, where it cleaves and resolves the cruciform DNA. In Polaromonas sp. (strain JS666 / ATCC BAA-500), this protein is Holliday junction branch migration complex subunit RuvA.